A 523-amino-acid chain; its full sequence is MVASMASALARNFLGSTPRWYKMTIVMFLIINPFIVALNPFVAGWLLVAEFIFTLSMALKCYPLLPGGLLALEAVFSGLTSAEQVKHELSANLEVLLLLMFMVAGIYFVRQLLLYVFTKLLISVRSKIALSLAFSVMAAFLSAFLDALTVVAVVISISVGFYSVYHKYVSTHPEHDINNDDSIHKQHHADLEQFRAFLRSLLMHAAVGTALGGVCTLVGEPQNLIIGEMAGWNFSEFFIRMSAVSIPVLICGLATCVLMEKLKWFGYGTVIPESVYLILKQSADHDDAHRTTQERLKLVCQAIICVWLIVGLAFHLAAVGLIGLSVIILATTFTGVSDEHAIGRAFTESLPFTALLSVFFVVVAVIIDQELFRPLIQMVLSAPQEMQLTLFYIANGVLSMVSDNVFVGTVYINEAHTALVNNVISRDHFDLLAVAINTGTNLPSVATPNGQAAFLFLLTSTLAPLVRMSYGRMMWMALPYTIVLAGVGLLSTMYLLPDMTQWFYESGWLQHKAAIPVITPASH.

Helical transmembrane passes span 28–48 (FLIINPFIVALNPFVAGWLLV), 51–71 (FIFTLSMALKCYPLLPGGLLA), 89–109 (LSANLEVLLLLMFMVAGIYFV), 137–157 (MAAFLSAFLDALTVVAVVISI), 237–257 (FFIRMSAVSIPVLICGLATCV), 302–322 (AIICVWLIVGLAFHLAAVGLI), 347–367 (TESLPFTALLSVFFVVVAVII), 390–410 (LFYIANGVLSMVSDNVFVGTV), 445–465 (VATPNGQAAFLFLLTSTLAPL), and 476–496 (MALPYTIVLAGVGLLSTMYLL).

The protein belongs to the NhaB Na(+)/H(+) (TC 2.A.34) antiporter family.

It is found in the cell inner membrane. The catalysed reaction is 2 Na(+)(in) + 3 H(+)(out) = 2 Na(+)(out) + 3 H(+)(in). Na(+)/H(+) antiporter that extrudes sodium in exchange for external protons. This chain is Na(+)/H(+) antiporter NhaB, found in Tolumonas auensis (strain DSM 9187 / NBRC 110442 / TA 4).